A 1597-amino-acid polypeptide reads, in one-letter code: Pentafunctional AROM polypeptide (1597 aa).

The segment at 1–384 (MGVPTKISIL…HEPRASTVSN (384 aa)) is 3-dehydroquinate synthase. Residues 44–46 (DTN), 81–84 (ESSK), 114–116 (GGV), and Asp119 contribute to the NAD(+) site. Residue Arg130 coordinates 7-phospho-2-dehydro-3-deoxy-D-arabino-heptonate. 139 to 140 (TT) provides a ligand contact to NAD(+). Asp146 and Lys152 together coordinate 7-phospho-2-dehydro-3-deoxy-D-arabino-heptonate. Residue Lys161 coordinates NAD(+). Asn162 is a 7-phospho-2-dehydro-3-deoxy-D-arabino-heptonate binding site. Residues 179 to 182 (FLNT) and Asn190 contribute to the NAD(+) site. Glu194 is a Zn(2+) binding site. 7-phospho-2-dehydro-3-deoxy-D-arabino-heptonate contacts are provided by residues 194–197 (EVIK) and Lys250. Glu260 acts as the Proton acceptor; for 3-dehydroquinate synthase activity in catalysis. 7-phospho-2-dehydro-3-deoxy-D-arabino-heptonate is bound by residues 264–268 (RNLLN) and His271. His271 lines the Zn(2+) pocket. His275 functions as the Proton acceptor; for 3-dehydroquinate synthase activity in the catalytic mechanism. Residues His287 and Lys356 each contribute to the 7-phospho-2-dehydro-3-deoxy-D-arabino-heptonate site. His287 contacts Zn(2+). Residues 397-842 (VSPGVPKNLN…WDSLAQTFKV (446 aa)) form an EPSP synthase region. Cys824 acts as the For EPSP synthase activity in catalysis. The interval 866 to 1057 (ASIFIIGMRG…RSKENTFFVS (192 aa)) is shikimate kinase. Position 872 to 879 (872 to 879 (GMRGAGKT)) interacts with ATP. Residues 1058 to 1278 (LTLPDLAPAA…AAPGQLSARE (221 aa)) are 3-dehydroquinase. The active-site Proton acceptor; for 3-dehydroquinate dehydratase activity is His1181. Lys1209 functions as the Schiff-base intermediate with substrate; for 3-dehydroquinate dehydratase activity in the catalytic mechanism. Residues 1291–1597 (SKKFAVIGNP…VQPKDDDIST (307 aa)) form a shikimate dehydrogenase region.

It in the N-terminal section; belongs to the sugar phosphate cyclases superfamily. Dehydroquinate synthase family. In the 2nd section; belongs to the EPSP synthase family. This sequence in the 3rd section; belongs to the shikimate kinase family. The protein in the 4th section; belongs to the type-I 3-dehydroquinase family. It in the C-terminal section; belongs to the shikimate dehydrogenase family. As to quaternary structure, homodimer. Requires Zn(2+) as cofactor.

It localises to the cytoplasm. The catalysed reaction is 7-phospho-2-dehydro-3-deoxy-D-arabino-heptonate = 3-dehydroquinate + phosphate. The enzyme catalyses 3-dehydroquinate = 3-dehydroshikimate + H2O. It catalyses the reaction shikimate + NADP(+) = 3-dehydroshikimate + NADPH + H(+). It carries out the reaction shikimate + ATP = 3-phosphoshikimate + ADP + H(+). The catalysed reaction is 3-phosphoshikimate + phosphoenolpyruvate = 5-O-(1-carboxyvinyl)-3-phosphoshikimate + phosphate. Its pathway is metabolic intermediate biosynthesis; chorismate biosynthesis; chorismate from D-erythrose 4-phosphate and phosphoenolpyruvate: step 2/7. It functions in the pathway metabolic intermediate biosynthesis; chorismate biosynthesis; chorismate from D-erythrose 4-phosphate and phosphoenolpyruvate: step 3/7. It participates in metabolic intermediate biosynthesis; chorismate biosynthesis; chorismate from D-erythrose 4-phosphate and phosphoenolpyruvate: step 4/7. The protein operates within metabolic intermediate biosynthesis; chorismate biosynthesis; chorismate from D-erythrose 4-phosphate and phosphoenolpyruvate: step 5/7. Its pathway is metabolic intermediate biosynthesis; chorismate biosynthesis; chorismate from D-erythrose 4-phosphate and phosphoenolpyruvate: step 6/7. The AROM polypeptide catalyzes 5 consecutive enzymatic reactions in prechorismate polyaromatic amino acid biosynthesis. In Blastomyces gilchristii (strain SLH14081) (Blastomyces dermatitidis), this protein is Pentafunctional AROM polypeptide.